A 1719-amino-acid chain; its full sequence is 5'-3' exoribonuclease 1 (1719 aa).

Over residues 1268–1298 (HKSGFTDHSVRHQQRKHDSQRKFKEEYKSPK) the composition is skewed to basic and acidic residues. Positions 1268-1317 (HKSGFTDHSVRHQQRKHDSQRKFKEEYKSPKAECQSQKLSSKQTSGGSAR) are disordered. Positions 1301–1314 (CQSQKLSSKQTSGG) are enriched in polar residues. Position 1382 is a phosphoserine (S1382). The span at 1397–1430 (ILKIDSPDTRDSKNDMKKSDNEATVSSRRDERGV) shows a compositional bias: basic and acidic residues. Disordered stretches follow at residues 1397 to 1445 (ILKI…KPHG) and 1634 to 1719 (ENKE…KPSE). Positions 1638–1660 (AQSSQATPLQTNKPGSSEATKMT) are enriched in polar residues. Low complexity predominate over residues 1661–1680 (PQESPPASSSSSQAAQPVSS). Over residues 1681-1690 (HVETASQGHV) the composition is skewed to polar residues.

Belongs to the 5'-3' exonuclease family. As to quaternary structure, found in a mRNP complex with UPF1, UPF2, UPF3B and XRN1. Associates with alpha and beta tubulins. Interacts with DIS3L2. Interacts with ZC3HAV1 in an RNA-dependent manner. Interacts with ZFP36L1. Interacts with TRIM71 (via NHL repeats) in an RNA-dependent manner. Interacts with YTHDC2 (via ANK repeats). Interacts with DHX34; the interaction is RNA-independent. As to expression, expressed in heart, brain (spinal cord, dorsal root and superior cervical ganglia, neurons of the cerebrum and brain stem), peripheral nerve fibers in the skin and intestine, spleen, lung, liver, skeletal muscle, kidney and testis.

It localises to the cytoplasm. Its function is as follows. Major 5'-3' exoribonuclease involved in mRNA decay. Required for the 5'-3'-processing of the G4 tetraplex-containing DNA and RNA substrates. The kinetic of hydrolysis is faster for G4 RNA tetraplex than for G4 DNA tetraplex and monomeric RNA tetraplex. Binds to RNA and DNA. Plays a role in replication-dependent histone mRNA degradation. This chain is 5'-3' exoribonuclease 1, found in Mus musculus (Mouse).